Reading from the N-terminus, the 442-residue chain is 26S proteasome non-ATPase regulatory subunit 12 homolog A (442 aa).

Residues 6–137 adopt a coiled-coil conformation; it reads KLEATIDRLL…EAADLMQEVA (132 aa). A PCI domain is found at 232-403; it reads EICRSYKAIY…GIVCFQIAKD (172 aa).

This sequence belongs to the proteasome subunit p55 family. Component of the 19S regulatory particle (RP/PA700) lid subcomplex of the 26S proteasome. The 26S proteasome is composed of a core protease (CP), known as the 20S proteasome, capped at one or both ends by the 19S regulatory particle (RP/PA700). The RP/PA700 complex is composed of at least 17 different subunits in two subcomplexes, the base and the lid, which form the portions proximal and distal to the 20S proteolytic core, respectively. Ubiquitous with highest expression in flowers.

It localises to the cytoplasm. The protein localises to the nucleus. Acts as a regulatory subunit of the 26 proteasome which is involved in the ATP-dependent degradation of ubiquitinated proteins. Required for gametogenesis and sporophyte development. Acts redundantly with RPN5B. The protein is 26S proteasome non-ATPase regulatory subunit 12 homolog A (RPN5A) of Arabidopsis thaliana (Mouse-ear cress).